We begin with the raw amino-acid sequence, 1168 residues long: Zinc finger CCHC domain-containing protein 2 (1168 aa).

4 disordered regions span residues 1 to 87 (MLRM…GGHA), 209 to 242 (EGSRGSVEDEPGGDDEQDAEKDGPGPEGGGCAKL), 561 to 693 (KRSL…LGTE), and 932 to 978 (ATSA…SDST). Residues 43 to 66 (PPPPPPTGLPRGPPPPPPSPPRGL) show a composition bias toward pro residues. Low complexity predominate over residues 67-78 (EPPVASGPTAGA). Residues 216 to 227 (EDEPGGDDEQDA) are compositionally biased toward acidic residues. Over residues 233–242 (GPEGGGCAKL) the composition is skewed to gly residues. The segment covering 574–588 (PQVEKEKIKKTENRL) has biased composition (basic and acidic residues). Low complexity predominate over residues 626–635 (SSESYSSPSS). A compositionally biased stretch (basic and acidic residues) spans 636-655 (PRHDGRESLESEEEKDRDTD). Residues 932-949 (ATSAQPASTGISPAQSTV) show a composition bias toward polar residues. The segment covering 951-965 (PAVPTHTPGPAPSPS) has biased composition (pro residues). Residues 966 to 978 (PALTHSTAQSDST) show a composition bias toward polar residues. The CCHC-type zinc-finger motif lies at 1121–1138 (VSCYNCGVSGHYAQDCKQ).

In Rattus norvegicus (Rat), this protein is Zinc finger CCHC domain-containing protein 2 (Zcchc2).